Reading from the N-terminus, the 122-residue chain is MKTIVRLFAILMVLISSVGFVGSAVAAELNPVDAKLTTEYGQKIDLNNEDVRGFRQLRGFYPNLAAKIIKYSPYDSVEEVLDIPGLSERQRQRLEANLDKFVVTPPSSELNEGGDRINPGLY.

An N-terminal signal peptide occupies residues 1-26 (MKTIVRLFAILMVLISSVGFVGSAVA).

This sequence belongs to the PsbU family. As to quaternary structure, PSII is composed of 1 copy each of membrane proteins PsbA, PsbB, PsbC, PsbD, PsbE, PsbF, PsbH, PsbI, PsbJ, PsbK, PsbL, PsbM, PsbT, PsbX, PsbY, PsbZ, Psb30/Ycf12, peripheral proteins PsbO, CyanoQ (PsbQ), PsbU, PsbV and a large number of cofactors. It forms dimeric complexes.

It localises to the cellular thylakoid membrane. Functionally, one of the extrinsic, lumenal subunits of photosystem II (PSII). PSII is a light-driven water plastoquinone oxidoreductase, using light energy to abstract electrons from H(2)O, generating a proton gradient subsequently used for ATP formation. The extrinsic proteins stabilize the structure of photosystem II oxygen-evolving complex (OEC), the ion environment of oxygen evolution and protect the OEC against heat-induced inactivation. This chain is Photosystem II extrinsic protein U, found in Crocosphaera subtropica (strain ATCC 51142 / BH68) (Cyanothece sp. (strain ATCC 51142)).